The primary structure comprises 593 residues: Aspartate--tRNA(Asp/Asn) ligase (593 aa).

Residue glutamate 173 participates in L-aspartate binding. The tract at residues 197–200 (QLFK) is aspartate. Arginine 219 lines the L-aspartate pocket. Residues 219–221 (RDE) and glutamine 228 contribute to the ATP site. Residue histidine 451 coordinates L-aspartate. Residue glutamate 485 participates in ATP binding. An L-aspartate-binding site is contributed by arginine 492. 537–540 (GIDR) provides a ligand contact to ATP.

It belongs to the class-II aminoacyl-tRNA synthetase family. Type 1 subfamily. As to quaternary structure, homodimer.

It is found in the cytoplasm. It carries out the reaction tRNA(Asx) + L-aspartate + ATP = L-aspartyl-tRNA(Asx) + AMP + diphosphate. In terms of biological role, aspartyl-tRNA synthetase with relaxed tRNA specificity since it is able to aspartylate not only its cognate tRNA(Asp) but also tRNA(Asn). Reaction proceeds in two steps: L-aspartate is first activated by ATP to form Asp-AMP and then transferred to the acceptor end of tRNA(Asp/Asn). The protein is Aspartate--tRNA(Asp/Asn) ligase of Legionella pneumophila subsp. pneumophila (strain Philadelphia 1 / ATCC 33152 / DSM 7513).